A 135-amino-acid polypeptide reads, in one-letter code: Small ribosomal subunit protein uS11 (135 aa).

Residues 1–20 (MGRQRQQRSRGSRSRRRVRK) are disordered.

This sequence belongs to the universal ribosomal protein uS11 family. Part of the 30S ribosomal subunit. Interacts with proteins S7 and S18. Binds to IF-3.

Functionally, located on the platform of the 30S subunit, it bridges several disparate RNA helices of the 16S rRNA. Forms part of the Shine-Dalgarno cleft in the 70S ribosome. This Rubrobacter xylanophilus (strain DSM 9941 / JCM 11954 / NBRC 16129 / PRD-1) protein is Small ribosomal subunit protein uS11.